The sequence spans 147 residues: Large ribosomal subunit protein bL9 (147 aa).

It belongs to the bacterial ribosomal protein bL9 family.

Functionally, binds to the 23S rRNA. This is Large ribosomal subunit protein bL9 from Flavobacterium psychrophilum (strain ATCC 49511 / DSM 21280 / CIP 103535 / JIP02/86).